The sequence spans 403 residues: Neuromedin U receptor homolog nmur-2 (403 aa).

Residues 1–27 lie on the Extracellular side of the membrane; the sequence is MSQCTVEYNVSEITEYVLSTLGERCQS. The chain crosses the membrane as a helical span at residues 28-48; it reads AGIVIPTVIIYGTIFLLGLFG. Residues 49 to 68 are Cytoplasmic-facing; it reads NICTCIVIAANKSMHNPTNY. A helical membrane pass occupies residues 69-89; sequence YLFSLAVSDIIALILGLPMEF. Residues 90–109 lie on the Extracellular side of the membrane; that stretch reads YQSLDYSYPYRFSEGICKAR. A helical transmembrane segment spans residues 110-130; the sequence is AFLIEFTSYASIMIICCFSFE. At 131–151 the chain is on the cytoplasmic side; sequence RWLAICHPLRSKIFSTLWRAN. A helical transmembrane segment spans residues 152 to 172; it reads VLIILAWTISFVCALPIAFIV. The Extracellular portion of the chain corresponds to 173–216; that stretch reads QINKLPLPEDAKYQPWTNKVSTDGIFVLHTEFCAMNQSRPDQQK. A helical transmembrane segment spans residues 217–237; it reads MIIIFAFTVFFVIPAIAIVIM. At 238–268 the chain is on the cytoplasmic side; it reads YAHIAVQLESSEIDLKGDKMVKKRRNKSNRT. The chain crosses the membrane as a helical span at residues 269-289; the sequence is VLKMLLSVVITFFICWLPFHI. Topologically, residues 290–304 are extracellular; it reads QRLLSVYTTWSETTT. The chain crosses the membrane as a helical span at residues 305–325; it reads ISPPVQFLSMIVFYISGFCYY. The Cytoplasmic portion of the chain corresponds to 326–403; the sequence is SNSAANPILY…PHRKLEVHNY (78 aa).

Belongs to the G-protein coupled receptor 1 family.

Its subcellular location is the membrane. In terms of biological role, putative G protein-coupled receptor for pyrokinin-like neuropeptide derived from the processing of the neuropeptide precursor capa-1. This chain is Neuromedin U receptor homolog nmur-2, found in Caenorhabditis elegans.